The sequence spans 74 residues: Exodeoxyribonuclease 7 small subunit (74 aa).

This sequence belongs to the XseB family. In terms of assembly, heterooligomer composed of large and small subunits.

It is found in the cytoplasm. It carries out the reaction Exonucleolytic cleavage in either 5'- to 3'- or 3'- to 5'-direction to yield nucleoside 5'-phosphates.. Bidirectionally degrades single-stranded DNA into large acid-insoluble oligonucleotides, which are then degraded further into small acid-soluble oligonucleotides. This chain is Exodeoxyribonuclease 7 small subunit, found in Neisseria gonorrhoeae (strain ATCC 700825 / FA 1090).